Consider the following 313-residue polypeptide: Ribosomal RNA small subunit methyltransferase H (313 aa).

Residues 35–37 (GGH), aspartate 55, phenylalanine 79, aspartate 100, and glutamine 107 each bind S-adenosyl-L-methionine.

Belongs to the methyltransferase superfamily. RsmH family.

The protein localises to the cytoplasm. The catalysed reaction is cytidine(1402) in 16S rRNA + S-adenosyl-L-methionine = N(4)-methylcytidine(1402) in 16S rRNA + S-adenosyl-L-homocysteine + H(+). Its function is as follows. Specifically methylates the N4 position of cytidine in position 1402 (C1402) of 16S rRNA. In Burkholderia orbicola (strain MC0-3), this protein is Ribosomal RNA small subunit methyltransferase H.